Reading from the N-terminus, the 361-residue chain is Phosphoserine aminotransferase (361 aa).

L-glutamate contacts are provided by Ser9 and Arg42. Pyridoxal 5'-phosphate-binding positions include 76–77 (AR), Trp102, Thr153, Asp173, and Gln196. Position 197 is an N6-(pyridoxal phosphate)lysine (Lys197). 238–239 (NT) contacts pyridoxal 5'-phosphate.

It belongs to the class-V pyridoxal-phosphate-dependent aminotransferase family. SerC subfamily. In terms of assembly, homodimer. Requires pyridoxal 5'-phosphate as cofactor.

The protein localises to the cytoplasm. It catalyses the reaction O-phospho-L-serine + 2-oxoglutarate = 3-phosphooxypyruvate + L-glutamate. The enzyme catalyses 4-(phosphooxy)-L-threonine + 2-oxoglutarate = (R)-3-hydroxy-2-oxo-4-phosphooxybutanoate + L-glutamate. Its pathway is amino-acid biosynthesis; L-serine biosynthesis; L-serine from 3-phospho-D-glycerate: step 2/3. It participates in cofactor biosynthesis; pyridoxine 5'-phosphate biosynthesis; pyridoxine 5'-phosphate from D-erythrose 4-phosphate: step 3/5. Catalyzes the reversible conversion of 3-phosphohydroxypyruvate to phosphoserine and of 3-hydroxy-2-oxo-4-phosphonooxybutanoate to phosphohydroxythreonine. The protein is Phosphoserine aminotransferase of Erwinia tasmaniensis (strain DSM 17950 / CFBP 7177 / CIP 109463 / NCPPB 4357 / Et1/99).